Reading from the N-terminus, the 308-residue chain is tRNA dimethylallyltransferase (308 aa).

ATP is bound at residue 11–18 (GPTGIGKT). 13–18 (TGIGKT) lines the substrate pocket. Residues 36 to 39 (DSMQ) form an interaction with substrate tRNA region.

It belongs to the IPP transferase family. In terms of assembly, monomer. Mg(2+) is required as a cofactor.

It carries out the reaction adenosine(37) in tRNA + dimethylallyl diphosphate = N(6)-dimethylallyladenosine(37) in tRNA + diphosphate. Functionally, catalyzes the transfer of a dimethylallyl group onto the adenine at position 37 in tRNAs that read codons beginning with uridine, leading to the formation of N6-(dimethylallyl)adenosine (i(6)A). This is tRNA dimethylallyltransferase from Lactobacillus gasseri (strain ATCC 33323 / DSM 20243 / BCRC 14619 / CIP 102991 / JCM 1131 / KCTC 3163 / NCIMB 11718 / NCTC 13722 / AM63).